Reading from the N-terminus, the 515-residue chain is ATP-dependent rRNA helicase rrp-3 (515 aa).

The tract at residues 1 to 85 (MSTKRRKTSD…LDVAPEQEEV (85 aa)) is disordered. Positions 15 to 24 (LKKAAAPSAP) are enriched in low complexity. Positions 25–55 (ELKKEKKVKDKSTKDKSSTKKTEKTEKKQDA) are enriched in basic and acidic residues. A compositionally biased stretch (acidic residues) spans 69-85 (TEEDSVTLDVAPEQEEV). The Q motif signature appears at 90 to 118 (KTFKDLGIVDALCEACERLGYKNPTPIQE). A Helicase ATP-binding domain is found at 121 to 292 (IPLALQNRDI…RASLRDPLKV (172 aa)). 134-141 (AETGSGKT) contacts ATP. The DEAD box motif lies at 240–243 (DEAD). Residues 316–464 (HKDTYLVYLC…EYPLEKDEVM (149 aa)) form the Helicase C-terminal domain. Residues 482-515 (KSLMENQGKHGGLLKRKRGNGQGGGRDHMDAEEG) are disordered. Positions 506 to 515 (GRDHMDAEEG) are enriched in basic and acidic residues.

Belongs to the DEAD box helicase family. DDX47/RRP3 subfamily.

The protein localises to the nucleus. Functionally, required for pre-ribosomal RNA processing. Involved in the maturation of the 35S-pre-rRNA and to its cleavage to mature 18S rRNA. In Neurospora crassa (strain ATCC 24698 / 74-OR23-1A / CBS 708.71 / DSM 1257 / FGSC 987), this protein is ATP-dependent rRNA helicase rrp-3 (rrp-3).